Reading from the N-terminus, the 178-residue chain is ATP synthase subunit d, mitochondrial (178 aa).

Residues 149–178 (NKPTFWPHTPEEQVGYKSKEQLEAEAQGHH) form a disordered region. Residues 165-178 (KSKEQLEAEAQGHH) show a composition bias toward basic and acidic residues.

Belongs to the ATPase d subunit family. F-type ATPases have 2 components, CF(1) - the catalytic core - and CF(0) - the membrane proton channel. CF(0) seems to have nine subunits: a, b, c, d, e, f, g, F6 and 8 (or A6L).

The protein localises to the mitochondrion. It is found in the mitochondrion inner membrane. Its function is as follows. Mitochondrial membrane ATP synthase (F(1)F(0) ATP synthase or Complex V) produces ATP from ADP in the presence of a proton gradient across the membrane which is generated by electron transport complexes of the respiratory chain. F-type ATPases consist of two structural domains, F(1) - containing the extramembraneous catalytic core, and F(0) - containing the membrane proton channel, linked together by a central stalk and a peripheral stalk. During catalysis, ATP synthesis in the catalytic domain of F(1) is coupled via a rotary mechanism of the central stalk subunits to proton translocation. Part of the complex F(0) domain and the peripheric stalk, which acts as a stator to hold the catalytic alpha(3)beta(3) subcomplex and subunit a/ATP6 static relative to the rotary elements. The polypeptide is ATP synthase subunit d, mitochondrial (Drosophila melanogaster (Fruit fly)).